The chain runs to 950 residues: Protocadherin alpha-3 (950 aa).

The N-terminal stretch at 1–29 (MLFSWREDPGAQCLLLSLLLLAASEVGSG) is a signal peptide. Cadherin domains are found at residues 30 to 133 (QLHY…APVF), 134 to 242 (PMSV…APAF), 243 to 350 (ERTI…VPEL), 351 to 455 (VIHS…APAF), 456 to 565 (SQSE…APAL), and 581 to 678 (VPRS…APKA). Residues 30–697 (QLHYSVSEEA…GPEAALVDVN (668 aa)) are Extracellular-facing. 2 N-linked (GlcNAc...) asparagine glycosylation sites follow: N257 and N265. A glycan (N-linked (GlcNAc...) asparagine) is linked at N548. Residues 698–718 (VYLIVAICAVSSLLVLTLLLY) form a helical membrane-spanning segment. Over 719 to 950 (TALRCSAPPT…GNSTTDNSDQ (232 aa)) the chain is Cytoplasmic. PXXP repeat units follow at residues 734–737 (PGKP) and 774–777 (PSLP). The tract at residues 734–894 (PGKPTLVCSS…PDKFIIPGSP (161 aa)) is 6 X 4 AA repeats of P-X-X-P. Disordered regions lie at residues 777-806 (PPCP…NPDW), 831-856 (GPGG…EVSP), and 869-889 (FKYG…DKFI). A compositionally biased stretch (basic and acidic residues) spans 782 to 797 (SRDREEKQDVDVDLSA). PXXP repeat units follow at residues 799-802 (PRQP), 832-835 (PGGP), 873-876 (PGNP), and 891-894 (PGSP). Residues 901–950 (QEPANSQIDKSDFITFGKKEETKKKKKKKKGNKTQEKKEKGNSTTDNSDQ) are disordered. The span at 909–923 (DKSDFITFGKKEETK) shows a compositional bias: basic and acidic residues.

Its subcellular location is the cell membrane. Its function is as follows. Potential calcium-dependent cell-adhesion protein. May be involved in the establishment and maintenance of specific neuronal connections in the brain. The polypeptide is Protocadherin alpha-3 (PCDHA3) (Pan troglodytes (Chimpanzee)).